The primary structure comprises 647 residues: XK-related protein 4 (647 aa).

The chain crosses the membrane as a helical span at residues 142–162; sequence WFGLTLFFVVLGSLSVQVFSF. Residues 193-238 are disordered; the sequence is VSSGSAAGEGEARPSTPQRQASNASKSNIAATNSGSNSNGATRTSG. Ser197 is modified (phosphoserine). A compositionally biased stretch (polar residues) spans 207–236; that stretch reads STPQRQASNASKSNIAATNSGSNSNGATRT. The next 7 helical transmembrane spans lie at 245–265, 328–348, 362–382, 393–415, 425–445, 454–474, and 484–504; these read CSFCIWLLQSLIHILQLGQVW, LQALQGFTAAASLVSLAWALA, KPISYMAVIIQFCWHFFTIAA, VFQLYFGIFIVLHWCIMTFWIVH, WEEIVFDMVVGIIYIFSWFNV, LFIYYFVILLENTALSALWYL, and FAIPALCVVFSSFLTGVVFML.

It belongs to the XK family. Homodimer; homodimerization takes place upon caspase cleavage. Interacts with the processed C-terminus of XRCC4 (protein XRCC4, C-terminus); interaction promotes the phospholipid scramblase activity. Post-translationally, undergoes proteolytic processing by caspase-3 (CASP3), caspase-6 (CASP6) and caspase-7 (CASP7) to generate the XK-related protein 4, processed form, leading to its activation.

The protein resides in the cell membrane. It carries out the reaction a 1,2-diacyl-sn-glycero-3-phospho-L-serine(in) = a 1,2-diacyl-sn-glycero-3-phospho-L-serine(out). Phospholipid scramblase activity is activated upon caspase cleavage to generate the XK-related protein 4, processed form. Does not act prior the onset of apoptosis. Its activity is regulated as follows. Homodimerizes upon caspase cleavage. Phospholipid scramblase activity is activated following interaction with the processed C-terminus of XRCC4 (protein XRCC4, C-terminus). Its function is as follows. Phospholipid scramblase that promotes phosphatidylserine exposure on apoptotic cell surface. Phosphatidylserine is a specific marker only present at the surface of apoptotic cells and acts as a specific signal for engulfment. This is XK-related protein 4 from Rattus norvegicus (Rat).